The sequence spans 165 residues: Crossover junction endodeoxyribonuclease RuvC (165 aa).

Active-site residues include D7, E67, and D140. 3 residues coordinate Mg(2+): D7, E67, and D140.

It belongs to the RuvC family. As to quaternary structure, homodimer which binds Holliday junction (HJ) DNA. The HJ becomes 2-fold symmetrical on binding to RuvC with unstacked arms; it has a different conformation from HJ DNA in complex with RuvA. In the full resolvosome a probable DNA-RuvA(4)-RuvB(12)-RuvC(2) complex forms which resolves the HJ. Requires Mg(2+) as cofactor.

It is found in the cytoplasm. It catalyses the reaction Endonucleolytic cleavage at a junction such as a reciprocal single-stranded crossover between two homologous DNA duplexes (Holliday junction).. Functionally, the RuvA-RuvB-RuvC complex processes Holliday junction (HJ) DNA during genetic recombination and DNA repair. Endonuclease that resolves HJ intermediates. Cleaves cruciform DNA by making single-stranded nicks across the HJ at symmetrical positions within the homologous arms, yielding a 5'-phosphate and a 3'-hydroxyl group; requires a central core of homology in the junction. The consensus cleavage sequence is 5'-(A/T)TT(C/G)-3'. Cleavage occurs on the 3'-side of the TT dinucleotide at the point of strand exchange. HJ branch migration catalyzed by RuvA-RuvB allows RuvC to scan DNA until it finds its consensus sequence, where it cleaves and resolves the cruciform DNA. The chain is Crossover junction endodeoxyribonuclease RuvC from Thermotoga petrophila (strain ATCC BAA-488 / DSM 13995 / JCM 10881 / RKU-1).